The sequence spans 417 residues: Equilibrative nucleotide transporter 2 (417 aa).

11 helical membrane-spanning segments follow: residues 20-40 (AVCW…LTIV), 52-72 (PSRI…SVLV), 85-105 (LFGY…NLAT), 109-129 (GGIG…LADA), 144-164 (PEFL…TSGL), 185-205 (LFFA…AYVF), 265-285 (LAVT…GFLS), 292-312 (SLGD…DLVG), 328-348 (CLLI…ITGI), 354-374 (WMIF…VCVI), and 393-413 (LVLY…LWLV).

It belongs to the SLC29A/ENT transporter (TC 2.A.57) family. As to expression, expressed in leaves and flowers.

The protein resides in the cell membrane. May be involved in nucleoside transport. This Arabidopsis thaliana (Mouse-ear cress) protein is Equilibrative nucleotide transporter 2 (ENT2).